A 153-amino-acid chain; its full sequence is Nucleoside diphosphate kinase (153 aa).

Positions 9, 57, 85, 91, 102, and 112 each coordinate ATP. His115 (pros-phosphohistidine intermediate) is an active-site residue.

This sequence belongs to the NDK family. As to quaternary structure, homotetramer. Mg(2+) is required as a cofactor.

It localises to the cytoplasm. The enzyme catalyses a 2'-deoxyribonucleoside 5'-diphosphate + ATP = a 2'-deoxyribonucleoside 5'-triphosphate + ADP. It carries out the reaction a ribonucleoside 5'-diphosphate + ATP = a ribonucleoside 5'-triphosphate + ADP. Functionally, major role in the synthesis of nucleoside triphosphates other than ATP. The ATP gamma phosphate is transferred to the NDP beta phosphate via a ping-pong mechanism, using a phosphorylated active-site intermediate. The chain is Nucleoside diphosphate kinase from Parabacteroides distasonis (strain ATCC 8503 / DSM 20701 / CIP 104284 / JCM 5825 / NCTC 11152).